Consider the following 235-residue polypeptide: Deoxyribose-phosphate aldolase (235 aa).

Catalysis depends on D107, which acts as the Proton donor/acceptor. Residue K167 is the Schiff-base intermediate with acetaldehyde of the active site. Catalysis depends on K197, which acts as the Proton donor/acceptor.

It belongs to the DeoC/FbaB aldolase family. DeoC type 1 subfamily. Homotetramer.

It is found in the cytoplasm. It carries out the reaction 2-deoxy-D-ribose 5-phosphate = D-glyceraldehyde 3-phosphate + acetaldehyde. It participates in carbohydrate degradation; 2-deoxy-D-ribose 1-phosphate degradation; D-glyceraldehyde 3-phosphate and acetaldehyde from 2-deoxy-alpha-D-ribose 1-phosphate: step 2/2. Its function is as follows. Catalyzes a reversible aldol reaction between acetaldehyde and D-glyceraldehyde 3-phosphate to generate 2-deoxy-D-ribose 5-phosphate. This is Deoxyribose-phosphate aldolase from Aeropyrum pernix (strain ATCC 700893 / DSM 11879 / JCM 9820 / NBRC 100138 / K1).